Reading from the N-terminus, the 225-residue chain is Peptidyl-tRNA hydrolase (225 aa).

A tRNA-binding site is contributed by Tyr-14. His-19 (proton acceptor) is an active-site residue. TRNA-binding residues include Phe-64, Asn-66, and Asn-112. The tract at residues 184-225 is disordered; sequence ALRMQPPKPEKPKPAAKAPEAQAPEAAPDARSALQKLADRFR. The segment covering 198-210 has biased composition (low complexity); that stretch reads AAKAPEAQAPEAA.

It belongs to the PTH family. In terms of assembly, monomer.

The protein resides in the cytoplasm. It carries out the reaction an N-acyl-L-alpha-aminoacyl-tRNA + H2O = an N-acyl-L-amino acid + a tRNA + H(+). Hydrolyzes ribosome-free peptidyl-tRNAs (with 1 or more amino acids incorporated), which drop off the ribosome during protein synthesis, or as a result of ribosome stalling. In terms of biological role, catalyzes the release of premature peptidyl moieties from peptidyl-tRNA molecules trapped in stalled 50S ribosomal subunits, and thus maintains levels of free tRNAs and 50S ribosomes. The sequence is that of Peptidyl-tRNA hydrolase from Cereibacter sphaeroides (strain KD131 / KCTC 12085) (Rhodobacter sphaeroides).